The primary structure comprises 271 residues: Elongation factor Ts (271 aa).

The tract at residues 76 to 79 (TDFV) is involved in Mg(2+) ion dislocation from EF-Tu.

Belongs to the EF-Ts family.

It is found in the cytoplasm. Associates with the EF-Tu.GDP complex and induces the exchange of GDP to GTP. It remains bound to the aminoacyl-tRNA.EF-Tu.GTP complex up to the GTP hydrolysis stage on the ribosome. The polypeptide is Elongation factor Ts (Mycobacterium ulcerans (strain Agy99)).